Here is a 176-residue protein sequence, read N- to C-terminus: Ribosome maturation factor RimM (176 aa).

The PRC barrel domain maps to 100–173 (EGEFHLLDLV…WLRLTPPPGL (74 aa)).

Belongs to the RimM family. As to quaternary structure, binds ribosomal protein uS19.

It is found in the cytoplasm. In terms of biological role, an accessory protein needed during the final step in the assembly of 30S ribosomal subunit, possibly for assembly of the head region. Essential for efficient processing of 16S rRNA. May be needed both before and after RbfA during the maturation of 16S rRNA. It has affinity for free ribosomal 30S subunits but not for 70S ribosomes. This is Ribosome maturation factor RimM from Prochlorococcus marinus (strain MIT 9313).